Consider the following 704-residue polypeptide: Pentatricopeptide repeat-containing protein At4g28010 (704 aa).

PPR repeat units follow at residues 71–105 (LAFA…DTFI), 106–140 (NFVS…GFAF), 141–175 (NVYN…SLMP), 176–210 (DVFS…GCSW), 211–245 (SLVT…GLEA), 246–280 (DLVV…GDSP), 281–315 (CAIT…GVRP), 316–350 (NVYT…DEEP), 351–385 (NAVT…RTRP), 386–416 (DNIT…MLKD), 423–453 (DVIS…LVEK), 458–492 (DRVT…KIVR), 493–527 (NSDT…ELQP), 528–562 (SVFD…NNFP), 563–597 (DVVS…GLSP), 598–632 (DLFT…GFEP), and 633–667 (DAHI…DIVL).

Belongs to the PPR family. P subfamily.

This Arabidopsis thaliana (Mouse-ear cress) protein is Pentatricopeptide repeat-containing protein At4g28010.